The sequence spans 138 residues: Cysteine desulfuration protein SufE (138 aa).

Cys-51 functions as the Cysteine persulfide intermediate in the catalytic mechanism.

This sequence belongs to the SufE family. As to quaternary structure, homodimer. Interacts with SufS.

It is found in the cytoplasm. It participates in cofactor biosynthesis; iron-sulfur cluster biosynthesis. In terms of biological role, participates in cysteine desulfuration mediated by SufS. Cysteine desulfuration mobilizes sulfur from L-cysteine to yield L-alanine and constitutes an essential step in sulfur metabolism for biosynthesis of a variety of sulfur-containing biomolecules. Functions as a sulfur acceptor for SufS, by mediating the direct transfer of the sulfur atom from the S-sulfanylcysteine of SufS, an intermediate product of cysteine desulfuration process. The sequence is that of Cysteine desulfuration protein SufE from Escherichia coli O81 (strain ED1a).